The chain runs to 99 residues: Accessory protein p12I (99 aa).

Positions R4–P11 match the SH3-binding motif. Residues L12–L32 traverse the membrane as a helical segment. The SH3-binding signature appears at R33–P38. The helical transmembrane segment at I48–L68 threads the bilayer. Short sequence motifs (SH3-binding) lie at residues P70 to R77 and R88 to P93.

It belongs to the HTLV-1 accessory protein p12I family. In terms of assembly, p12I is a homodimer. Interacts with human CANX, CALR, ATP6V0C, IL2RB, IL2RG. Binds to MHC-I heavy chains HLA-A2, HLA-B7 and HLA-Cw4. Post-translationally, ubiquitinated; a fraction of P12I is degraded via the ubiquitin system.

Its subcellular location is the host endoplasmic reticulum membrane. The protein localises to the host Golgi apparatus. It is found in the host cis-Golgi network membrane. In terms of biological role, p12I is a modulator of T-lymphocyte proliferation and immune function and may contribute to establish a persistent infection. Binds and down-modulates cell surface expression of interleukin-2 receptors IL2RB and IL2RG. Also down-modulates cell surface MHC-I molecules by binding to free immature MHC-I heavy chains in the ER and targeting them to the proteasome for degradation. Binding to IL2RB mediates recruitment of JAK1 and JAK3. As a result of this interaction, p12I increases DNA-binding and transcriptional activity of STAT5. This is Accessory protein p12I from Homo sapiens (Human).